The following is a 164-amino-acid chain: Choriogonadotropin subunit beta (164 aa).

The signal sequence occupies residues 1 to 20 (MEMLQGLLLCLLLSTGGAWA). 6 cysteine pairs are disulfide-bonded: Cys29-Cys77, Cys43-Cys92, Cys46-Cys130, Cys54-Cys108, Cys58-Cys110, and Cys113-Cys120. A glycan (N-linked (GlcNAc...) asparagine) is linked at Asn50. Residues 135–164 (FQDSSSKDPPRNLTSPSQLLEPADPPLVPQ) form a disordered region. A glycan (O-linked (GalNAc...) serine) is linked at Ser140. N-linked (GlcNAc...) asparagine glycosylation occurs at Asn146. The O-linked (GalNAc...) serine glycan is linked to Ser151.

Belongs to the glycoprotein hormones subunit beta family. In terms of assembly, heterodimer of a common alpha chain and a unique beta chain which confers biological specificity to thyrotropin, lutropin, follitropin and gonadotropin. In terms of tissue distribution, placenta.

It localises to the secreted. Its function is as follows. Stimulates the ovaries to synthesize the steroids that are essential for the maintenance of pregnancy. This Callithrix jacchus (White-tufted-ear marmoset) protein is Choriogonadotropin subunit beta (CGB).